An 81-amino-acid polypeptide reads, in one-letter code: Short neurotoxin SN160 (81 aa).

A signal peptide spans 1–21 (MKTLLLTLVVVTIVCLDLGYT). Intrachain disulfides connect Cys24–Cys43, Cys38–Cys60, Cys62–Cys73, and Cys74–Cys79.

The protein belongs to the three-finger toxin family. Short-chain subfamily. Type I alpha-neurotoxin sub-subfamily. As to expression, expressed by the venom gland.

It localises to the secreted. Its function is as follows. Binds to muscle nicotinic acetylcholine receptor (nAChR) and inhibit acetylcholine from binding to the receptor, thereby impairing neuromuscular transmission. The sequence is that of Short neurotoxin SN160 from Hydrophis hardwickii (Hardwick's spine-bellied seasnake).